Consider the following 338-residue polypeptide: Glycerol-3-phosphate dehydrogenase [NAD(P)+] (338 aa).

Residues serine 14, tyrosine 15, histidine 35, and lysine 109 each contribute to the NADPH site. Lysine 109, glycine 138, and threonine 140 together coordinate sn-glycerol 3-phosphate. Residue alanine 142 participates in NADPH binding. The sn-glycerol 3-phosphate site is built by lysine 194, aspartate 247, serine 257, arginine 258, and asparagine 259. Lysine 194 functions as the Proton acceptor in the catalytic mechanism. Arginine 258 is an NADPH binding site. 2 residues coordinate NADPH: valine 282 and glutamate 284.

This sequence belongs to the NAD-dependent glycerol-3-phosphate dehydrogenase family.

It is found in the cytoplasm. The catalysed reaction is sn-glycerol 3-phosphate + NAD(+) = dihydroxyacetone phosphate + NADH + H(+). It catalyses the reaction sn-glycerol 3-phosphate + NADP(+) = dihydroxyacetone phosphate + NADPH + H(+). The protein operates within membrane lipid metabolism; glycerophospholipid metabolism. Its function is as follows. Catalyzes the reduction of the glycolytic intermediate dihydroxyacetone phosphate (DHAP) to sn-glycerol 3-phosphate (G3P), the key precursor for phospholipid synthesis. This is Glycerol-3-phosphate dehydrogenase [NAD(P)+] from Sodalis glossinidius (strain morsitans).